The sequence spans 273 residues: NADPH-dependent 7-cyano-7-deazaguanine reductase (273 aa).

Position 81-83 (81-83 (VES)) interacts with substrate. An NADPH-binding site is contributed by 83-84 (SK). The active-site Thioimide intermediate is the Cys-179. Asp-186 serves as the catalytic Proton donor. 218-219 (AE) provides a ligand contact to substrate. Residue 247-248 (RG) participates in NADPH binding.

The protein belongs to the GTP cyclohydrolase I family. QueF type 2 subfamily. Homodimer.

It localises to the cytoplasm. It catalyses the reaction 7-aminomethyl-7-carbaguanine + 2 NADP(+) = 7-cyano-7-deazaguanine + 2 NADPH + 3 H(+). It participates in tRNA modification; tRNA-queuosine biosynthesis. Catalyzes the NADPH-dependent reduction of 7-cyano-7-deazaguanine (preQ0) to 7-aminomethyl-7-deazaguanine (preQ1). This Rickettsia prowazekii (strain Madrid E) protein is NADPH-dependent 7-cyano-7-deazaguanine reductase.